A 109-amino-acid polypeptide reads, in one-letter code: Fluoride-specific ion channel FluC 1 (109 aa).

The next 3 helical transmembrane spans lie at 21–41, 52–72, and 83–103; these read FYFK…GFFI, ILFS…HFLY, and LFIY…IGFQ.

Belongs to the fluoride channel Fluc/FEX (TC 1.A.43) family.

The protein resides in the cell inner membrane. It catalyses the reaction fluoride(in) = fluoride(out). Its function is as follows. Fluoride-specific ion channel. Important for reducing fluoride concentration in the cell, thus reducing its toxicity. This chain is Fluoride-specific ion channel FluC 1, found in Prochlorococcus marinus subsp. pastoris (strain CCMP1986 / NIES-2087 / MED4).